A 224-amino-acid polypeptide reads, in one-letter code: UPF0758 protein SPO0054 (224 aa).

The MPN domain occupies 102-224 (VISSWDALLD…ELSFRAEGYL (123 aa)). Zn(2+) is bound by residues His-173, His-175, and Asp-186. Residues 173–186 (HNHPSGDPTPSQSD) carry the JAMM motif motif.

Belongs to the UPF0758 family.

In Ruegeria pomeroyi (strain ATCC 700808 / DSM 15171 / DSS-3) (Silicibacter pomeroyi), this protein is UPF0758 protein SPO0054.